A 274-amino-acid polypeptide reads, in one-letter code: Large ribosomal subunit protein uL2 (274 aa).

Disordered stretches follow at residues lysine 21 to lysine 59 and valine 223 to glycine 274. Over residues serine 32–glycine 42 the composition is skewed to low complexity. Over residues asparagine 45–lysine 59 the composition is skewed to basic residues. The segment covering lysine 263–glycine 274 has biased composition (basic and acidic residues).

The protein belongs to the universal ribosomal protein uL2 family. Part of the 50S ribosomal subunit. Forms a bridge to the 30S subunit in the 70S ribosome.

Functionally, one of the primary rRNA binding proteins. Required for association of the 30S and 50S subunits to form the 70S ribosome, for tRNA binding and peptide bond formation. It has been suggested to have peptidyltransferase activity; this is somewhat controversial. Makes several contacts with the 16S rRNA in the 70S ribosome. The protein is Large ribosomal subunit protein uL2 of Wolbachia sp. subsp. Drosophila simulans (strain wRi).